The primary structure comprises 627 residues: Putative ankyrin repeat protein L122 (627 aa).

12 ANK repeats span residues 61–94, 98–130, 153–186, 190–223, 228–259, 263–296, 300–333, 337–370, 374–407, 411–444, 448–480, and 491–523; these read KGWT…DVHI, KGRT…DINS, HACY…DPNI, YGKT…NANH, AETV…DINH, IGFT…NINL, DGFT…DIND, NNVT…DLEI, YDWT…NVNV, LGHT…NPNL, DKNT…DSNT, and REYN…NYSD.

The sequence is that of Putative ankyrin repeat protein L122 from Acanthamoeba polyphaga (Amoeba).